Consider the following 295-residue polypeptide: Ectoine dioxygenase (295 aa).

Residue Q129 participates in L-ectoine binding. K135 contacts 2-oxoglutarate. The Fe cation site is built by H146, D148, and H247.

Belongs to the PhyH family. EctD subfamily. In terms of assembly, homodimer. Requires Fe(2+) as cofactor.

The catalysed reaction is L-ectoine + 2-oxoglutarate + O2 = 5-hydroxyectoine + succinate + CO2. In terms of biological role, involved in the biosynthesis of 5-hydroxyectoine, called compatible solute, which helps organisms to survive extreme osmotic stress by acting as a highly soluble organic osmolyte. Catalyzes the 2-oxoglutarate-dependent selective hydroxylation of L-ectoine to yield (4S,5S)-5-hydroxyectoine. The protein is Ectoine dioxygenase of Streptomyces avermitilis (strain ATCC 31267 / DSM 46492 / JCM 5070 / NBRC 14893 / NCIMB 12804 / NRRL 8165 / MA-4680).